The sequence spans 503 residues: Maturase K (503 aa).

Belongs to the intron maturase 2 family. MatK subfamily.

Its subcellular location is the plastid. It localises to the chloroplast. Usually encoded in the trnK tRNA gene intron. Probably assists in splicing its own and other chloroplast group II introns. In Aethionema cordifolium (Lebanon stonecress), this protein is Maturase K.